Consider the following 1171-residue polypeptide: ATP-dependent helicase/deoxyribonuclease subunit B (1171 aa).

Residues 1 to 390 (MSLRFVIGRA…HPLVECIRSA (390 aa)) enclose the UvrD-like helicase ATP-binding domain. 8–15 (GRAGSGKS) is an ATP binding site. The region spanning 281 to 587 (MEQPRFHSPA…QFANIPPSLD (307 aa)) is the UvrD-like helicase C-terminal domain. 4 residues coordinate [4Fe-4S] cluster: Cys805, Cys1129, Cys1132, and Cys1138.

This sequence belongs to the helicase family. AddB/RexB type 1 subfamily. In terms of assembly, heterodimer of AddA and AddB. Requires Mg(2+) as cofactor. The cofactor is [4Fe-4S] cluster.

In terms of biological role, the heterodimer acts as both an ATP-dependent DNA helicase and an ATP-dependent, dual-direction single-stranded exonuclease. Recognizes the chi site generating a DNA molecule suitable for the initiation of homologous recombination. The AddB subunit has 5' -&gt; 3' nuclease activity but not helicase activity. The polypeptide is ATP-dependent helicase/deoxyribonuclease subunit B (Bacillus cereus (strain B4264)).